Consider the following 238-residue polypeptide: MSEVTTAEFNEEGKYLRKIRSFVLREGRLTKGQAQAIESQWPTMGLDYSPVPLNLSEVFGREADTVLEIGFGMGASLVQMAKDAPEQNFIGIEVHKPGVGSCLSDAAIAGVTNLRVYHHDAMEVLEHAIADGSLARVQLFFPDPWHKKRHHKRRIVQAEFAELVRSKLKIGGVFHMATDWEEYSEHMLEVMNAAPGYKNQSVDDTVVPRPDHRPLTKFEARGHRLGHGVWDLMFERIV.

Glu-68, Glu-93, Asp-120, and Asp-143 together coordinate S-adenosyl-L-methionine. Residue Asp-143 is part of the active site. Substrate-binding positions include Lys-147, Asp-179, and 216 to 219 (TKFE).

The protein belongs to the class I-like SAM-binding methyltransferase superfamily. TrmB family.

It catalyses the reaction guanosine(46) in tRNA + S-adenosyl-L-methionine = N(7)-methylguanosine(46) in tRNA + S-adenosyl-L-homocysteine. It functions in the pathway tRNA modification; N(7)-methylguanine-tRNA biosynthesis. Catalyzes the formation of N(7)-methylguanine at position 46 (m7G46) in tRNA. The sequence is that of tRNA (guanine-N(7)-)-methyltransferase from Shewanella sp. (strain W3-18-1).